Reading from the N-terminus, the 208-residue chain is V-type ATP synthase subunit E (208 aa).

Belongs to the V-ATPase E subunit family.

In terms of biological role, produces ATP from ADP in the presence of a proton gradient across the membrane. This Chlamydia felis (strain Fe/C-56) (Chlamydophila felis) protein is V-type ATP synthase subunit E.